Consider the following 430-residue polypeptide: Tyrosine--tRNA ligase (430 aa).

Residue Y32 participates in L-tyrosine binding. Residues P37–H46 carry the 'HIGH' region motif. L-tyrosine is bound by residues Y172 and Q176. Residues K232–T236 carry the 'KMSKS' region motif. K235 lines the ATP pocket. The 68-residue stretch at I362–A429 folds into the S4 RNA-binding domain.

This sequence belongs to the class-I aminoacyl-tRNA synthetase family. TyrS type 1 subfamily. Homodimer.

It is found in the cytoplasm. It catalyses the reaction tRNA(Tyr) + L-tyrosine + ATP = L-tyrosyl-tRNA(Tyr) + AMP + diphosphate + H(+). Its function is as follows. Catalyzes the attachment of tyrosine to tRNA(Tyr) in a two-step reaction: tyrosine is first activated by ATP to form Tyr-AMP and then transferred to the acceptor end of tRNA(Tyr). In Parabacteroides distasonis (strain ATCC 8503 / DSM 20701 / CIP 104284 / JCM 5825 / NCTC 11152), this protein is Tyrosine--tRNA ligase.